Consider the following 279-residue polypeptide: Protein NipSnap homolog 1 (279 aa).

Belongs to the NipSnap family.

It localises to the mitochondrion matrix. Functionally, protein involved in mitophagy. Accumulates on the mitochondria surface in response to mitochondrial depolarization and acts as a 'eat me' signal by recruiting proteins involved in selective autophagy. This is Protein NipSnap homolog 1 from Danio rerio (Zebrafish).